Here is a 611-residue protein sequence, read N- to C-terminus: MNLEEMKERQKHIRNFSIVAHIDHGKSTLADRILEMTDSISKREMKNQILDDMPLERERGITIKLNAVALTYHAKDGEDYIFHLIDTPGHVDFSYEVSRSLAACEGAVLVVDATQGVEAQTLANVFLALDNDLEILPVINKIDLPSADPEGTKKQIEDEIGLDPDEAVDISAKTGMGVDEVLEKIVKDVPAPTGDLTAPLKALIFDSKYDDYRGVVLSVRVVEGTVKKGDRIKLMNGGTEYEVAEVGINSPKPLARDVLMAGDVGYITAAIKDIKDTRVGDTVTSADNPTDKPLEGYRQMTPMVYAGLYPTDNAKFNDLRDALEKLQLNDAALTFEPESSQALGFGFRCGFLGLLHMDVIQERLEREFNLDLITTAPSVTYHVELADGTTKEVENPAEMPDASSIKAIKEPYVRASIMVPNDYVGPVMELCQRKRGDFDTMEYLSDTRVNVIYHIPLSEIIFDFFDKLKSSTRGYASLDYEIDGYRPSNLVKIDILLNGDKVDALSFIAHRDFAAERGREITAKLKKIIPRQNFEIPIQAAIGSKIIARTNIKAYRKDVTARIHTGDPDRRAKLLDKQKRGKKRMKAVGKVDIPQAAFMAVLKTDEQLDEK.

The tr-type G domain occupies 11 to 193 (KHIRNFSIVA…KIVKDVPAPT (183 aa)). GTP-binding positions include 23–28 (DHGKST) and 140–143 (NKID).

Belongs to the TRAFAC class translation factor GTPase superfamily. Classic translation factor GTPase family. LepA subfamily.

It is found in the cell membrane. It catalyses the reaction GTP + H2O = GDP + phosphate + H(+). In terms of biological role, required for accurate and efficient protein synthesis under certain stress conditions. May act as a fidelity factor of the translation reaction, by catalyzing a one-codon backward translocation of tRNAs on improperly translocated ribosomes. Back-translocation proceeds from a post-translocation (POST) complex to a pre-translocation (PRE) complex, thus giving elongation factor G a second chance to translocate the tRNAs correctly. Binds to ribosomes in a GTP-dependent manner. The polypeptide is Elongation factor 4 (Limosilactobacillus reuteri (strain DSM 20016) (Lactobacillus reuteri)).